A 1896-amino-acid chain; its full sequence is MKASSGDQGSPPCFLRFPRPVRVVSGAEAELKCVVLGEPPPVVVWEKGGQQLAASERLSFPADGAEHGLLLTAALPTDAGVYVCRARNAAGEAYAAAAVTVLEPPASDPELQPAERPLPSPGSGEGAPVFLTGPRSQWVLRGAEVVLTCRAGGLPEPTLYWEKDGMALDEVWDSSHFALQPGRAEDGPGASLALRILAARLPDSGVYVCHARNAHGHAQAGALLQVHQPPESPPADPDEAPAPVVEPLKCAPKTFWVNEGKHAKFRCYVMGKPEPEIEWHWEGRPLLPDRRRLMYRDRDGGFVLKVLYCQAKDRGLYVCAARNSAGQTLSAVQLHVKEPRLRFTRPLQDVEGREHGIAVLECKVPNSRIPTAWFREDQRLLPCRKYEQIEEGTVRRLIIHRLKADDDGIYLCEMRGRVRTVANVTVKGPILKRLPRKLDVLEGENAVLLVETLEAGVEGRWSRDGEELPVICQSSSGHMHALVLPGVTREDAGEVTFSLGNSRTTTLLRVKCVKHSPPGPPILAEMFKGHKNTVLLTWKPPEPAPETPFIYRLERQEVGSEDWIQCFSIEKAGAVEVPGDCVPSEGDYRFRICTVSGHGRSPHVVFHGSAHLVPTARLVAGLEDVQVYDGEDAVFSLDLSTIIQGTWFLNGEELKSNEPEGQVEPGALRYRIEQKGLQHRLILHAVKHQDSGALVGFSCPGVQDSAALTIQESPVHILSPQDRVSLTFTTSERVVLTCELSRVDFPATWYKDGQKVEESELLVVKMDGRKHRLILPEAKVQDSGEFECRTEGVSAFFGVTVQDPPVHIVDPREHVFVHAITSECVMLACEVDREDAPVRWYKDGQEVEESDFVVLENEGPHRRLVLPATQPSDGGEFQCVAGDECAYFTVTITDVSSWIVYPSGKVYVAAVRLERVVLTCELCRPWAEVRWTKDGEEVVESPALLLQKEDTVRRLVLPAVQLEDSGEYLCEIDDESASFTVTVTEPPVRIIYPRDEVTLIAVTLECVVLMCELSREDAPVRWYKDGLEVEESEALVLERDGPRCRLVLPAAQPEDGGEFVCDAGDDSAFFTVTVTAPPERIVHPAARSLDLHFGAPGRVELRCEVAPAGSQVRWYKDGLEVEASDALQLGAEGPTRTLTLPHAQPEDAGEYVCETRHEAITFNVILAEPPVQFLALETTPSPLCVAPGEPVVLSCELSRAGAPVVWSHNGRPVQEGEGLELHAEGPRRVLCIQAAGPAHAGLYTCQSGAAPGAPSLSFTVQVAEPPVRVVAPEAAQTRVRSTPGGDLELVVHLSGPGGPVRWYKDGERLASQGRVQLEQAGARQVLRVQGARSGDAGEYLCDAPQDSRIFLVSVEEPLLVKLVSELTPLTVHEGDDATFRCEVSPPDADVTWLRNGAVVTPGPQVEMAQNGSSRILTLRGCQLGDAGTVTLRAGSTATSARLHVRETELLFLRRLQDVRAEEGQDVCLEVETGRVGAAGAVRWVRGGQPLPHDSRLSMAQDGHIHRLFIHGVILADQGTYGCESHHDRTLARLSVRPRQLRVLRPLEDVTISEGGSATFQLELSQEGVTGEWARGGVQLYPGPKCHIHSDGHRHRLVLNGLGLADSGCVSFTADSLRCAARLIVREVPVTIVRGPHDLEVTEGDTATFECELSQALADVTWEKDGNALTPSPRLRLQALGTRRLLQLRRCGPSDAGTYSCAVGTARAGPVRLTVRERTVAVLSELRSVSAREGDGATFECTVSEVETTGRWELGGRPLRPGARVRIRQEGKKHILVLSELRAEDAGEVRFQAGPAQSLALLEVEALPLQMCRHPPREKTVLVGRRAVLEVTVSRSGGHVCWLREGAELCPGDKYEMRSHGPTHSLVIHDVRPEDQGTYCCQAGQDSTHTRLLVEGN.

Phosphoserine is present on Ser10. One can recognise an Ig-like 1 domain in the interval 12 to 100 (PCFLRFPRPV…GEAYAAAAVT (89 aa)). The tract at residues 17 to 19 (FPR) is interaction with TTN. Residues Cys33 and Cys84 are joined by a disulfide bond. The tract at residues 85–94 (RARNAAGEAY) is interaction with TTN. The tract at residues 106–127 (ASDPELQPAERPLPSPGSGEGA) is disordered. 3 consecutive Ig-like domains span residues 128–225 (PVFL…ALLQ), 243–330 (PVVE…QTLS), and 339–425 (PRLR…ANVT). Intrachain disulfides connect Cys149–Cys209, Cys267–Cys319, and Cys362–Cys412. Positions 517–615 (PPGPPILAEM…FHGSAHLVPT (99 aa)) constitute a Fibronectin type-III domain. Ig-like domains lie at 714–800 (PVHI…FGVT), 804–893 (PPVH…VTIT), 902–982 (PSGK…FTVT), 986–1075 (PPVR…VTVT), 1078–1172 (PERI…PPVQ), 1174–1261 (LALE…FTVQ), 1265–1357 (PPVR…VEEP), 1357–1534 (PLLV…ARLS), 1628–1720 (PVTI…RTVA), and 1794–1896 (PAQS…VEGN). Intrachain disulfides connect Cys738/Cys788, Cys829/Cys879, Cys920/Cys970, Cys1011/Cys1061, Cys1103/Cys1153, and Cys1195/Cys1245. Intrachain disulfides connect Cys1381-Cys1522 and Cys1650-Cys1700.

Component of the 3M complex, composed of core components CUL7, CCDC8 and OBSL1. Interacts with CCDC8. Interacts with CUL7; the interaction is direct. Interacts with FBXW8. Interacts (via N-terminal Ig-like domain) with TTN/titin (via C-terminal Ig-like domain); the interaction is direct. In terms of tissue distribution, widely expressed, with predominant levels found in the heart.

The protein resides in the cytoplasm. It is found in the cytoskeleton. Its subcellular location is the microtubule organizing center. The protein localises to the centrosome. It localises to the perinuclear region. The protein resides in the golgi apparatus. Functionally, core component of the 3M complex, a complex required to regulate microtubule dynamics and genome integrity. It is unclear how the 3M complex regulates microtubules, it could act by controlling the level of a microtubule stabilizer. Acts as a regulator of the Cul7-RING(FBXW8) ubiquitin-protein ligase, playing a critical role in the ubiquitin ligase pathway that regulates Golgi morphogenesis and dendrite patterning in brain. Required to localize CUL7 to the Golgi apparatus in neurons. The polypeptide is Obscurin-like protein 1 (Homo sapiens (Human)).